The sequence spans 173 residues: Ribosome maturation factor RimM (173 aa).

The PRC barrel domain maps to 102–173 (EGEYYWSDLI…TMLVDWDPEF (72 aa)).

It belongs to the RimM family. As to quaternary structure, binds ribosomal protein uS19.

It localises to the cytoplasm. An accessory protein needed during the final step in the assembly of 30S ribosomal subunit, possibly for assembly of the head region. Essential for efficient processing of 16S rRNA. May be needed both before and after RbfA during the maturation of 16S rRNA. It has affinity for free ribosomal 30S subunits but not for 70S ribosomes. This chain is Ribosome maturation factor RimM, found in Methylobacillus flagellatus (strain ATCC 51484 / DSM 6875 / VKM B-1610 / KT).